We begin with the raw amino-acid sequence, 282 residues long: 1-deoxy-11-beta-hydroxypentalenate dehydrogenase (282 aa).

12–36 (GAASGIGLALSARFARAGAGVVMAD) is a binding site for NAD(+). Ser144 serves as a coordination point for substrate. The active-site Proton acceptor is the Tyr157. Lys161 is a binding site for NAD(+). The disordered stretch occupies residues 258–282 (PPPSPEEELWPVPKTTTATTATTKH). A compositionally biased stretch (low complexity) spans 267–282 (WPVPKTTTATTATTKH).

The protein belongs to the short-chain dehydrogenases/reductases (SDR) family.

The catalysed reaction is 1-deoxy-11beta-hydroxypentalenate + NAD(+) = 1-deoxy-11-oxopentalenate + NADH + H(+). It participates in antibiotic biosynthesis; pentalenolactone biosynthesis. Catalyzes the oxidation of 1-deoxy-11-beta-hydroxypentalenic acid to 1-deoxy-11-oxopentalenic acid in the biosynthesis of pentalenolactone antibiotic. This is 1-deoxy-11-beta-hydroxypentalenate dehydrogenase (pntF) from Streptomyces arenae.